Reading from the N-terminus, the 258-residue chain is Phosphosulfolactate synthase (258 aa).

The protein belongs to the phosphosulfolactate synthase family.

It carries out the reaction (2R)-O-phospho-3-sulfolactate = phosphoenolpyruvate + sulfite + H(+). Its pathway is cofactor biosynthesis; coenzyme M biosynthesis; sulfoacetaldehyde from phosphoenolpyruvate and sulfite: step 1/4. Catalyzes the addition of sulfite to phosphoenolpyruvate (PEP) to yield (2R)-phospho-3-sulfolactate (PSL). The sequence is that of Phosphosulfolactate synthase (comA) from Methanothermobacter thermautotrophicus (strain ATCC 29096 / DSM 1053 / JCM 10044 / NBRC 100330 / Delta H) (Methanobacterium thermoautotrophicum).